The sequence spans 70 residues: Large ribosomal subunit protein eL38 (70 aa).

Belongs to the eukaryotic ribosomal protein eL38 family.

This chain is Large ribosomal subunit protein eL38 (RpL38), found in Spodoptera frugiperda (Fall armyworm).